We begin with the raw amino-acid sequence, 75 residues long: Small ribosomal subunit protein bS18 (75 aa).

Residue Ala2 is modified to N-acetylalanine.

This sequence belongs to the bacterial ribosomal protein bS18 family. Part of the 30S ribosomal subunit. Forms a tight heterodimer with protein bS6.

Its function is as follows. Binds as a heterodimer with protein bS6 to the central domain of the 16S rRNA, where it helps stabilize the platform of the 30S subunit. The sequence is that of Small ribosomal subunit protein bS18 (rpsR) from Salmonella typhimurium (strain LT2 / SGSC1412 / ATCC 700720).